The following is a 109-amino-acid chain: MMAKIHEVKLHAKYFDLVLEGKKRAEFRKKDRNYERGDTLILHEWVQGVFTGRKVEARITDVTDLSDWLEDYVLLHRILGEILPLTVKLAVSSTFFINLRRRTVAIYLL.

This is an uncharacterized protein from Enterobacteriaceae (Bacteriophage P2).